The primary structure comprises 360 residues: Peptide chain release factor 1 (360 aa).

Q235 is modified (N5-methylglutamine). The interval 284 to 312 is disordered; sequence AKRQQAEASTRRNLLGSGDRSDRNRTYNF.

It belongs to the prokaryotic/mitochondrial release factor family. In terms of processing, methylated by PrmC. Methylation increases the termination efficiency of RF1.

The protein resides in the cytoplasm. Functionally, peptide chain release factor 1 directs the termination of translation in response to the peptide chain termination codons UAG and UAA. The protein is Peptide chain release factor 1 of Escherichia coli O81 (strain ED1a).